The primary structure comprises 364 residues: Valine dehydrogenase (364 aa).

K91 is a catalytic residue. 191–197 is a binding site for NAD(+); it reads GVGKVGH.

Belongs to the Glu/Leu/Phe/Val dehydrogenases family. Homodimer.

Its subcellular location is the cytoplasm. It catalyses the reaction L-valine + NAD(+) + H2O = 3-methyl-2-oxobutanoate + NH4(+) + NADH + H(+). The protein operates within amino-acid degradation; L-valine degradation. Its activity is regulated as follows. Inhibited by pyridoxal 5'-phosphate (PLP). In terms of biological role, oxidative deamination of branched-chain amino acids. Oxidizes L-valine and L-alpha-aminobutyric acid efficiently, and L-alanine and L-isoleucine less efficiently. D-valine and L-glutamate were not substrates for the enzyme. The catabolism of valine is the major source of fatty acid precursors for macrolide biosynthesis and a vital source of antibiotic precursors. The sequence is that of Valine dehydrogenase from Streptomyces albus (strain ATCC 21838 / DSM 41398 / FERM P-419 / JCM 4703 / NBRC 107858).